Here is a 265-residue protein sequence, read N- to C-terminus: MGAAVFFGCTFVAFGPAFSLFLITVAGDPLRVIILVAGAFFWLVSLLLASVVWFILVHVTDRSDARLQYGLLIFGAAVSVLLQEVFRFAYYKLLKKADEGLASLSEDGRSPISIRQMAYVSGLSFGIISGVFSVINILADALGPGVVGIHGDSPYYFLTSAFLTAAIILLHTFWGVVFFDACERRRYWALGLVVGSHLLTSGLTFLNPWYEASLLPIYAVTVSMGLWAFITAGGSLRSIQRSLSCRRQEDSRVMVYSALRIPPED.

Over 1-2 the chain is Lumenal; sequence MG. The helical transmembrane segment at 3-23 threads the bilayer; it reads AAVFFGCTFVAFGPAFSLFLI. At 24-31 the chain is on the cytoplasmic side; the sequence is TVAGDPLR. The helical transmembrane segment at 32–52 threads the bilayer; sequence VIILVAGAFFWLVSLLLASVV. Residues 53–68 are Lumenal-facing; that stretch reads WFILVHVTDRSDARLQ. Residues 69–89 traverse the membrane as a helical segment; the sequence is YGLLIFGAAVSVLLQEVFRFA. The Cytoplasmic portion of the chain corresponds to 90–118; the sequence is YYKLLKKADEGLASLSEDGRSPISIRQMA. A helical membrane pass occupies residues 119–139; the sequence is YVSGLSFGIISGVFSVINILA. At 140–158 the chain is on the lumenal side; sequence DALGPGVVGIHGDSPYYFL. The helical transmembrane segment at 159-179 threads the bilayer; the sequence is TSAFLTAAIILLHTFWGVVFF. At 180 to 186 the chain is on the cytoplasmic side; the sequence is DACERRR. A helical transmembrane segment spans residues 187–207; sequence YWALGLVVGSHLLTSGLTFLN. Residues 208-213 lie on the Lumenal side of the membrane; that stretch reads PWYEAS. A helical transmembrane segment spans residues 214–234; it reads LLPIYAVTVSMGLWAFITAGG. Topologically, residues 235–265 are cytoplasmic; sequence SLRSIQRSLSCRRQEDSRVMVYSALRIPPED.

This sequence belongs to the APH-1 family. In terms of assembly, the functional gamma-secretase complex is composed of at least four polypeptides: a presenilin homodimer (PSEN1 or PSEN2), nicastrin (NCSTN), APH1 (APH1A or APH1B) and PSENEN/PEN2.

The protein resides in the endoplasmic reticulum membrane. It is found in the golgi apparatus. The protein localises to the golgi stack membrane. Functionally, non-catalytic subunit of the gamma-secretase complex, an endoprotease complex that catalyzes the intramembrane cleavage of integral membrane proteins such as Notch receptors and APP (amyloid-beta precursor protein). Required for normal gamma-secretase assembly. The gamma-secretase complex plays a role in Notch and Wnt signaling cascades and regulation of downstream processes via its role in processing key regulatory proteins, and by regulating cytosolic CTNNB1 levels. In Mus musculus (Mouse), this protein is Gamma-secretase subunit APH-1A (Aph1a).